The chain runs to 103 residues: MESDKMMPGGLTEARPATPEIQEIATTVKSQLEEKTNKTYEKFEAVEYKSQVVAGINYYIKVHVGGNSYVHIKVFKSLPYQNKPLELSGYQVDKTKDDELTGF.

A Secondary area of contact motif is present at residues 51–55 (QVVAG).

It belongs to the cystatin family.

The protein resides in the cytoplasm. Its function is as follows. This is an intracellular thiol proteinase inhibitor. This Sus scrofa (Pig) protein is Cystatin-A1.